The chain runs to 460 residues: Serine--tRNA ligase (460 aa).

Positions 50–65 are enriched in basic and acidic residues; it reads DRNEVSSKIGELKQAG. 2 disordered regions span residues 50 to 71 and 109 to 129; these read DRNE…DAAQ and PDED…RREG. Over residues 109–121 the composition is skewed to acidic residues; that stretch reads PDEDAPVGDSEAE. Residue 241–243 coordinates L-serine; the sequence is TAE. ATP contacts are provided by residues 272–274 and Val-288; that span reads RRE. Glu-295 is a binding site for L-serine. An ATP-binding site is contributed by 368-371; sequence EVSS. Residue Ser-404 participates in L-serine binding.

This sequence belongs to the class-II aminoacyl-tRNA synthetase family. Type-1 seryl-tRNA synthetase subfamily. Homodimer. The tRNA molecule binds across the dimer.

Its subcellular location is the cytoplasm. The catalysed reaction is tRNA(Ser) + L-serine + ATP = L-seryl-tRNA(Ser) + AMP + diphosphate + H(+). The enzyme catalyses tRNA(Sec) + L-serine + ATP = L-seryl-tRNA(Sec) + AMP + diphosphate + H(+). The protein operates within aminoacyl-tRNA biosynthesis; selenocysteinyl-tRNA(Sec) biosynthesis; L-seryl-tRNA(Sec) from L-serine and tRNA(Sec): step 1/1. Its function is as follows. Catalyzes the attachment of serine to tRNA(Ser). Is also able to aminoacylate tRNA(Sec) with serine, to form the misacylated tRNA L-seryl-tRNA(Sec), which will be further converted into selenocysteinyl-tRNA(Sec). This is Serine--tRNA ligase from Halobacterium salinarum (strain ATCC 29341 / DSM 671 / R1).